Consider the following 268-residue polypeptide: Tropinone reductase homolog At2g29150 (268 aa).

22–46 contributes to the NADP(+) binding site; the sequence is LVTGGSKGLGEAVVEELAMLGARVH. S155 is a binding site for substrate. Y167 serves as the catalytic Proton acceptor.

It belongs to the short-chain dehydrogenases/reductases (SDR) family. SDR65C subfamily.

Enantiospecific reductase active on cyclic monoterpenes and small flexible lipophilic carbonyls. No activity with tropinone, nitrogen-containing tropinone analogs, tropine or pseudotropine as substrate. In Arabidopsis thaliana (Mouse-ear cress), this protein is Tropinone reductase homolog At2g29150.